We begin with the raw amino-acid sequence, 249 residues long: NH(3)-dependent NAD(+) synthetase (249 aa).

Gly-29 to Ser-36 contacts ATP. Asp-35 serves as a coordination point for Mg(2+). Position 116 (Arg-116) interacts with deamido-NAD(+). Thr-136 lines the ATP pocket. Mg(2+) is bound at residue Glu-141. 2 residues coordinate deamido-NAD(+): Lys-149 and Asp-156. Lys-165 and Ser-187 together coordinate ATP. His-233–Lys-234 lines the deamido-NAD(+) pocket.

Belongs to the NAD synthetase family. Homodimer.

It catalyses the reaction deamido-NAD(+) + NH4(+) + ATP = AMP + diphosphate + NAD(+) + H(+). It functions in the pathway cofactor biosynthesis; NAD(+) biosynthesis; NAD(+) from deamido-NAD(+) (ammonia route): step 1/1. Catalyzes the ATP-dependent amidation of deamido-NAD to form NAD. Uses ammonia as a nitrogen source. The sequence is that of NH(3)-dependent NAD(+) synthetase from Syntrophomonas wolfei subsp. wolfei (strain DSM 2245B / Goettingen).